Consider the following 241-residue polypeptide: ATP synthase subunit a (241 aa).

The next 5 membrane-spanning stretches (helical) occupy residues 30–50 (GQVFLTSWILLGALLVFISVG), 91–111 (FIGTLFLFVFVSNWGGALIPW), 128–148 (INTTIALALLVSLSYFYAGLS), 193–213 (LVVGVLVFLVPLVLPIPVMFL), and 214–234 (GLFTSAIQALIFATLAAYYIG).

Belongs to the ATPase A chain family. As to quaternary structure, F-type ATPases have 2 components, CF(1) - the catalytic core - and CF(0) - the membrane proton channel. CF(1) has five subunits: alpha(3), beta(3), gamma(1), delta(1), epsilon(1). CF(0) has four main subunits: a, b, b' and c.

It is found in the cellular thylakoid membrane. In terms of biological role, key component of the proton channel; it plays a direct role in the translocation of protons across the membrane. The polypeptide is ATP synthase subunit a (Prochlorococcus marinus subsp. pastoris (strain CCMP1986 / NIES-2087 / MED4)).